Consider the following 372-residue polypeptide: MNLEEENTIFKPLYSLKHSPINAYFSKNSDDFVVRERPLYEFSGKGEHLILHINKKDLTTNEALKILSETSGVKIRDFGYAGLKDKQGSTFQYLSMPKKFESFLSNFSHPKLKILEIFTHENKLRIGHLKGNTFFIRLKKVLPSDALKLEQALMNLDKQGFTNYFGYQRFGKFGDNYKEGLEILHGKKMKNVKMKEFLISAFQSELFNRYLSKRVELSHFANDFSEKELIQIYKISKEEAKELKKQEQFFKLLKGEVLGHYPFGKCFLCEDLSAELGRFKARDISAMGLLIGAKAYETGEGLALNLENEIFKDTLEFKAKMQGSRRFMWGYLEELKWRYDEEKAHFCIEFFLQKGSYATVVLEEILHKNLFE.

D85 functions as the Nucleophile in the catalytic mechanism. Residues 160–330 enclose the TRUD domain; the sequence is GFTNYFGYQR…MQGSRRFMWG (171 aa).

The protein belongs to the pseudouridine synthase TruD family.

It carries out the reaction uridine(13) in tRNA = pseudouridine(13) in tRNA. Responsible for synthesis of pseudouridine from uracil-13 in transfer RNAs. The chain is tRNA pseudouridine synthase D from Campylobacter jejuni subsp. jejuni serotype O:23/36 (strain 81-176).